Here is a 468-residue protein sequence, read N- to C-terminus: Immunoglobulin superfamily member 21 (468 aa).

The first 24 residues, 1-24, serve as a signal peptide directing secretion; sequence MQAAPSLRRASCLLLAAILDLARG. Positions 25–132 constitute an Ig-like 1 domain; that stretch reads YLTVNIEPLP…RATREKVVLA (108 aa). A disulfide bridge connects residues C46 and C116. Residues N82, N165, and N407 are each glycosylated (N-linked (GlcNAc...) asparagine). Positions 344–429 constitute an Ig-like 2 domain; sequence PKIMMTPSRA…GSTDTHTRLI (86 aa).

In terms of assembly, interacts (Ig-like 1 domain) with NRXN2 (via Laminin G-like 1 domain) in a trans-interaction manner. Expressed in brain (at protein levels). Highly expressed in the pyramidal cell layer of the dorsal and ventral hippocampal CA1 and CA3 regions, layers 5 and 6 of the cortex, the thalamus and the pons and weakly expressed in the cerebellum. Expressed in neurons but not in glia.

The protein localises to the postsynaptic cell membrane. Functionally, involved in synaptic inhibition in the brain. Selectively regulates inhibitory presynaptic differentiation through interacting with presynaptic NRXN2. This Mus musculus (Mouse) protein is Immunoglobulin superfamily member 21 (Igsf21).